The primary structure comprises 444 residues: Nuclear envelope integral membrane protein 1 (444 aa).

The first 43 residues, 1 to 43 (MAGGMKVAVSPAVGPGPWGSGVGGGGTVRLLLILSGCLVYGTA), serve as a signal peptide directing secretion. A glycan (N-linked (GlcNAc...) asparagine) is linked at Asn-125. The next 5 helical transmembrane spans lie at 161–181 (PKLF…DLLS), 186–206 (FYYS…IIFI), 216–236 (PIYV…QLVF), 245–265 (CYWQ…FAVC), and 289–309 (LCFM…IIIA). An a; required for its colocalization with lamins at the nuclear envelope region spans residues 186–297 (FYYSTGMSVG…GLCFMYSGIQ (112 aa)). A b; required for interaction with RAN-GTP region spans residues 336–405 (PVPPRLLTEE…LTPNEVSVHE (70 aa)). Positions 336–444 (PVPPRLLTEE…PAITQNNFLT (109 aa)) are required for nuclear localization. 3 positions are modified to phosphoserine: Ser-368, Ser-424, and Ser-425.

Belongs to the NEMP family. Homooligomer. Interacts with RAN-GTP. Interacts with EMD. In terms of processing, phosphorylation may regulate its interaction with RAN-GTP.

Its subcellular location is the nucleus inner membrane. It is found in the nucleus envelope. Its function is as follows. Together with EMD, contributes to nuclear envelope stiffness in germ cells. Required for female fertility. Essential for normal erythropoiesis. Required for efficient nuclear envelope opening and enucleation during the late stages of erythroblast maturation. The chain is Nuclear envelope integral membrane protein 1 (NEMP1) from Pongo abelii (Sumatran orangutan).